Consider the following 450-residue polypeptide: Endosomal transmembrane epsin interactor 1 (450 aa).

The N-terminal stretch at 1–29 (MILLVNLFVLLSVVCVLLNLAGFILGCQG) is a signal peptide. Residues 30-85 (AQFVSSVPRCDLVDLGEGKICFCCEEFQPAKCTDKENALKLFPVQPCSAVHLLLKK) lie on the Lumenal side of the membrane. A helical transmembrane segment spans residues 86–106 (VLFALCALNALTTTVCLVAAA). Topologically, residues 107 to 450 (LRYLQIFATR…LIGVIRETVL (344 aa)) are cytoplasmic. The tract at residues 107–450 (LRYLQIFATR…LIGVIRETVL (344 aa)) is mediates interaction with EPN1. 2 consecutive short sequence motifs (PPxY; mediates interaction with ITCH) follow at residues 148-151 (PPSY) and 194-197 (PPPY). The tract at residues 235–284 (DGDIPNIPAEENASTSTPSSTLVRPIRSRRALPPLRTRSKSDPVLHPSEE) is disordered. Residues 246-256 (NASTSTPSSTL) show a composition bias toward polar residues. A compositionally biased stretch (basic and acidic residues) spans 273 to 284 (SKSDPVLHPSEE). A Glycyl lysine isopeptide (Lys-Gly) (interchain with G-Cter in ubiquitin) cross-link involves residue Lys274. Ser275 is subject to Phosphoserine. Glycyl lysine isopeptide (Lys-Gly) (interchain with G-Cter in ubiquitin) cross-links involve residues Lys329 and Lys365.

This sequence belongs to the ENTREP family. In terms of assembly, interacts with ITCH; enhances the ubiquitination of CXCR4 by ITCH and the subsequent endocytosis and desensitization of the receptor. Interacts with EPN1. Monoubiquitinated at Lys-274, Lys-329 and Lys-365 by ITCH. In terms of tissue distribution, prominently expressed in muscle.

Its subcellular location is the early endosome membrane. The protein localises to the late endosome membrane. The protein resides in the recycling endosome membrane. It is found in the cell membrane. Its function is as follows. Functions as an activator of the E3 ubiquitin protein ligase ITCH in the ubiquitination of the CXCL12-activated CXCR4 receptor. Thereby, triggers CXCR4 endocytosis and desensitization, negatively regulating the CXCL12/CXCR4 signaling pathway. This Homo sapiens (Human) protein is Endosomal transmembrane epsin interactor 1.